The chain runs to 876 residues: Leucine--tRNA ligase (876 aa).

Residues 42–52 (PYPSGKLHMGH) carry the 'HIGH' region motif. The 'KMSKS' region motif lies at 634-638 (KMGKS). K637 is a binding site for ATP.

It belongs to the class-I aminoacyl-tRNA synthetase family.

It is found in the cytoplasm. The enzyme catalyses tRNA(Leu) + L-leucine + ATP = L-leucyl-tRNA(Leu) + AMP + diphosphate. In Variovorax paradoxus (strain S110), this protein is Leucine--tRNA ligase.